The chain runs to 206 residues: Protein GrpE (206 aa).

This sequence belongs to the GrpE family. As to quaternary structure, homodimer.

It is found in the cytoplasm. Functionally, participates actively in the response to hyperosmotic and heat shock by preventing the aggregation of stress-denatured proteins, in association with DnaK and GrpE. It is the nucleotide exchange factor for DnaK and may function as a thermosensor. Unfolded proteins bind initially to DnaJ; upon interaction with the DnaJ-bound protein, DnaK hydrolyzes its bound ATP, resulting in the formation of a stable complex. GrpE releases ADP from DnaK; ATP binding to DnaK triggers the release of the substrate protein, thus completing the reaction cycle. Several rounds of ATP-dependent interactions between DnaJ, DnaK and GrpE are required for fully efficient folding. This chain is Protein GrpE, found in Shewanella sp. (strain W3-18-1).